An 803-amino-acid chain; its full sequence is H(+)/Cl(-) exchange transporter 7 (803 aa).

Residues 1 to 46 (MANVSKKVSWSGRDRDDEEGAPLLRRTGQPDEETPLLNGAGPGARQ) form a disordered region. Topologically, residues 1–124 (MANVSKKVSW…TAFRTVEIKR (124 aa)) are cytoplasmic. Ser9 carries the phosphoserine modification. Transmembrane regions (helical) follow at residues 125–157 (WVIC…YRVI) and 172–195 (FSLL…VAFI). Positions 201–205 (GSGIP) match the Selectivity filter part_1 motif. Chloride is bound at residue Ser202. The helical intramembrane region spans 204–211 (IPQIKCFL). 2 helical membrane-spanning segments follow: residues 221 to 239 (RLKT…VVGG) and 245 to 262 (EGPM…ISQG). Positions 243–247 (GKEGP) match the Selectivity filter part_2 motif. 2 intramembrane regions (helical) span residues 286–298 (FVSA…VSAA) and 302–310 (PVGGVLFSL). Helical transmembrane passes span 320–339 (FLTW…LNFV), 373–403 (IPVF…FRIR), 408–430 (PCLQ…FVLI), 485–505 (PMTL…TYGL), and 510–533 (GVFI…LSYL). A Selectivity filter part_3 motif is present at residues 510 to 514 (GVFIP). Residue Phe512 participates in chloride binding. The helical intramembrane region spans 543–557 (GKYALMGAAAQLGGI). The segment at residues 558-560 (VRM) is an intramembrane region (note=Loop between two helices). An intramembrane region (helical) is located at residues 561–572 (TLSLTVIMMEAT). The note=Loop between two helices intramembrane region spans 573–576 (SNVT). Residues 577 to 595 (YGFPIMLVLMTAKIVGDVF) form a helical membrane-spanning segment. The Cytoplasmic portion of the chain corresponds to 596–803 (IEGLYDMHIQ…GLEELSLAQT (208 aa)). Tyr600 is a chloride binding site. CBS domains follow at residues 629-693 (MSTP…VFVE) and 739-797 (MNPS…GLEE). ATP contacts are provided by residues 656 to 658 (HNG) and 781 to 784 (TRKD). A Phosphoserine modification is found at Ser799.

This sequence belongs to the chloride channel (TC 2.A.49) family. ClC-7/CLCN7 subfamily. Chloride channel 7 are heteromers of alpha (CLCN7) and beta (OSTM1) subunits. As to expression, liver, spleen, kidneys and brain.

It localises to the lysosome membrane. It carries out the reaction 2 chloride(in) + H(+)(out) = 2 chloride(out) + H(+)(in). Its function is as follows. Slowly voltage-gated channel mediating the exchange of chloride ions against protons. Functions as antiporter and contributes to the acidification of the lysosome lumen and may be involved in maintaining lysosomal pH. The CLC channel family contains both chloride channels and proton-coupled anion transporters that exchange chloride or another anion for protons. The presence of conserved gating glutamate residues is typical for family members that function as antiporters. The polypeptide is H(+)/Cl(-) exchange transporter 7 (Mus musculus (Mouse)).